The chain runs to 388 residues: Formate-dependent phosphoribosylglycinamide formyltransferase (388 aa).

N(1)-(5-phospho-beta-D-ribosyl)glycinamide is bound by residues 20-21 and Glu-80; that span reads EL. Residues Arg-112, Lys-153, 158 to 163, 193 to 196, and Glu-201 contribute to the ATP site; these read SSGKGQ and EEFI. In terms of domain architecture, ATP-grasp spans 117 to 306; the sequence is RLAFEKLGLR…EFEIHARAIL (190 aa). Glu-265 and Glu-277 together coordinate Mg(2+). Residues Asp-284, Lys-352, and 359 to 360 contribute to the N(1)-(5-phospho-beta-D-ribosyl)glycinamide site; that span reads RR.

It belongs to the PurK/PurT family. Homodimer.

The catalysed reaction is N(1)-(5-phospho-beta-D-ribosyl)glycinamide + formate + ATP = N(2)-formyl-N(1)-(5-phospho-beta-D-ribosyl)glycinamide + ADP + phosphate + H(+). Its pathway is purine metabolism; IMP biosynthesis via de novo pathway; N(2)-formyl-N(1)-(5-phospho-D-ribosyl)glycinamide from N(1)-(5-phospho-D-ribosyl)glycinamide (formate route): step 1/1. Its function is as follows. Involved in the de novo purine biosynthesis. Catalyzes the transfer of formate to 5-phospho-ribosyl-glycinamide (GAR), producing 5-phospho-ribosyl-N-formylglycinamide (FGAR). Formate is provided by PurU via hydrolysis of 10-formyl-tetrahydrofolate. The protein is Formate-dependent phosphoribosylglycinamide formyltransferase of Methanococcus maripaludis (strain C5 / ATCC BAA-1333).